A 764-amino-acid chain; its full sequence is A-type ATP synthase subunit A (764 aa).

Belongs to the ATPase alpha/beta chains family. In terms of assembly, has multiple subunits with at least A(3), B(3), C, D, E, F, H, I and proteolipid K(x). Post-translationally, this protein undergoes a protein self splicing that involves a post-translational excision of the VDE intervening region (intein) followed by peptide ligation.

The protein resides in the cell membrane. The catalysed reaction is ATP + H2O + 4 H(+)(in) = ADP + phosphate + 5 H(+)(out). Component of the A-type ATP synthase that produces ATP from ADP in the presence of a proton gradient across the membrane. The A chain is the catalytic subunit. In Thermoplasma acidophilum (strain ATCC 25905 / DSM 1728 / JCM 9062 / NBRC 15155 / AMRC-C165), this protein is A-type ATP synthase subunit A.